The following is a 367-amino-acid chain: Probable dual-specificity RNA methyltransferase RlmN (367 aa).

The Proton acceptor role is filled by glutamate 92. Residues 98-326 (QEYGLSVCVT…YDTLKKNGIN (229 aa)) form the Radical SAM core domain. Cysteine 105 and cysteine 341 are disulfide-bonded. [4Fe-4S] cluster is bound by residues cysteine 112, cysteine 116, and cysteine 119. S-adenosyl-L-methionine is bound by residues 164–165 (GE), serine 196, 219–221 (SLH), and asparagine 297. The S-methylcysteine intermediate role is filled by cysteine 341.

Belongs to the radical SAM superfamily. RlmN family. [4Fe-4S] cluster serves as cofactor.

The protein resides in the cytoplasm. It carries out the reaction adenosine(2503) in 23S rRNA + 2 reduced [2Fe-2S]-[ferredoxin] + 2 S-adenosyl-L-methionine = 2-methyladenosine(2503) in 23S rRNA + 5'-deoxyadenosine + L-methionine + 2 oxidized [2Fe-2S]-[ferredoxin] + S-adenosyl-L-homocysteine. The enzyme catalyses adenosine(37) in tRNA + 2 reduced [2Fe-2S]-[ferredoxin] + 2 S-adenosyl-L-methionine = 2-methyladenosine(37) in tRNA + 5'-deoxyadenosine + L-methionine + 2 oxidized [2Fe-2S]-[ferredoxin] + S-adenosyl-L-homocysteine. Its function is as follows. Specifically methylates position 2 of adenine 2503 in 23S rRNA and position 2 of adenine 37 in tRNAs. This chain is Probable dual-specificity RNA methyltransferase RlmN, found in Listeria welshimeri serovar 6b (strain ATCC 35897 / DSM 20650 / CCUG 15529 / CIP 8149 / NCTC 11857 / SLCC 5334 / V8).